A 386-amino-acid polypeptide reads, in one-letter code: Alanine racemase (386 aa).

Lysine 48 functions as the Proton acceptor; specific for D-alanine in the catalytic mechanism. An N6-(pyridoxal phosphate)lysine modification is found at lysine 48. Arginine 149 contributes to the substrate binding site. The Proton acceptor; specific for L-alanine role is filled by tyrosine 278. A substrate-binding site is contributed by methionine 326.

Belongs to the alanine racemase family. Requires pyridoxal 5'-phosphate as cofactor.

The catalysed reaction is L-alanine = D-alanine. It participates in amino-acid biosynthesis; D-alanine biosynthesis; D-alanine from L-alanine: step 1/1. Catalyzes the interconversion of L-alanine and D-alanine. May also act on other amino acids. This chain is Alanine racemase (alr), found in Nostoc sp. (strain PCC 7120 / SAG 25.82 / UTEX 2576).